Consider the following 354-residue polypeptide: UDP-3-O-acylglucosamine N-acyltransferase (354 aa).

The active-site Proton acceptor is H247.

It belongs to the transferase hexapeptide repeat family. LpxD subfamily. In terms of assembly, homotrimer.

It catalyses the reaction a UDP-3-O-[(3R)-3-hydroxyacyl]-alpha-D-glucosamine + a (3R)-hydroxyacyl-[ACP] = a UDP-2-N,3-O-bis[(3R)-3-hydroxyacyl]-alpha-D-glucosamine + holo-[ACP] + H(+). The protein operates within bacterial outer membrane biogenesis; LPS lipid A biosynthesis. Functionally, catalyzes the N-acylation of UDP-3-O-acylglucosamine using 3-hydroxyacyl-ACP as the acyl donor. Is involved in the biosynthesis of lipid A, a phosphorylated glycolipid that anchors the lipopolysaccharide to the outer membrane of the cell. The polypeptide is UDP-3-O-acylglucosamine N-acyltransferase (Chlamydia trachomatis serovar L2b (strain UCH-1/proctitis)).